Reading from the N-terminus, the 432-residue chain is Enolase (432 aa).

Q163 serves as a coordination point for (2R)-2-phosphoglycerate. Residue E205 is the Proton donor of the active site. Residues D242, E285, and D312 each contribute to the Mg(2+) site. Positions 337, 366, 367, and 388 each coordinate (2R)-2-phosphoglycerate. K337 functions as the Proton acceptor in the catalytic mechanism.

This sequence belongs to the enolase family. It depends on Mg(2+) as a cofactor.

It is found in the cytoplasm. Its subcellular location is the secreted. It localises to the cell surface. It catalyses the reaction (2R)-2-phosphoglycerate = phosphoenolpyruvate + H2O. Its pathway is carbohydrate degradation; glycolysis; pyruvate from D-glyceraldehyde 3-phosphate: step 4/5. Catalyzes the reversible conversion of 2-phosphoglycerate (2-PG) into phosphoenolpyruvate (PEP). It is essential for the degradation of carbohydrates via glycolysis. The protein is Enolase of Bifidobacterium adolescentis (strain ATCC 15703 / DSM 20083 / NCTC 11814 / E194a).